Here is a 468-residue protein sequence, read N- to C-terminus: Argininosuccinate lyase (468 aa).

It belongs to the lyase 1 family. Argininosuccinate lyase subfamily.

It is found in the cytoplasm. It carries out the reaction 2-(N(omega)-L-arginino)succinate = fumarate + L-arginine. It participates in amino-acid biosynthesis; L-arginine biosynthesis; L-arginine from L-ornithine and carbamoyl phosphate: step 3/3. This is Argininosuccinate lyase from Hahella chejuensis (strain KCTC 2396).